The following is a 334-amino-acid chain: S-adenosylmethionine decarboxylase proenzyme 1 (334 aa).

A substrate-binding site is contributed by Phe-7. Active-site residues include Glu-8 and Glu-11. Glu-67 is a binding site for substrate. Ser-68 functions as the Schiff-base intermediate with substrate; via pyruvic acid in the catalytic mechanism. Position 68 is a pyruvic acid (Ser); by autocatalysis (Ser-68). Catalysis depends on Cys-82, which acts as the Proton donor; for catalytic activity. Phe-223 is a substrate binding site. Active-site proton acceptor; for processing activity residues include Ser-229 and His-243. Glu-247 is a binding site for substrate. Ser-298 is subject to Phosphoserine.

The protein belongs to the eukaryotic AdoMetDC family. As to quaternary structure, heterotetramer of two alpha and two beta chains. The cofactor is pyruvate. Is synthesized initially as an inactive proenzyme. Formation of the active enzyme involves a self-maturation process in which the active site pyruvoyl group is generated from an internal serine residue via an autocatalytic post-translational modification. Two non-identical subunits are generated from the proenzyme in this reaction, and the pyruvate is formed at the N-terminus of the alpha chain, which is derived from the carboxyl end of the proenzyme. The post-translation cleavage follows an unusual pathway, termed non-hydrolytic serinolysis, in which the side chain hydroxyl group of the serine supplies its oxygen atom to form the C-terminus of the beta chain, while the remainder of the serine residue undergoes an oxidative deamination to produce ammonia and the pyruvoyl group blocking the N-terminus of the alpha chain. As to expression, expressed in embryonic stem cells; subsequently down-regulated in differentiating neural precursor cells.

It carries out the reaction S-adenosyl-L-methionine + H(+) = S-adenosyl 3-(methylsulfanyl)propylamine + CO2. Its pathway is amine and polyamine biosynthesis; S-adenosylmethioninamine biosynthesis; S-adenosylmethioninamine from S-adenosyl-L-methionine: step 1/1. In terms of biological role, essential for biosynthesis of the polyamines spermidine and spermine. Promotes maintenance and self-renewal of embryonic stem cells, by maintaining spermine levels. This is S-adenosylmethionine decarboxylase proenzyme 1 (Amd1) from Mus musculus (Mouse).